The following is an 838-amino-acid chain: Ras-interacting protein RIP3 (838 aa).

Disordered stretches follow at residues 66-97 (VSTS…QQQA), 157-290 (KPTT…TSPK), and 305-336 (NSKT…QQQA). Composition is skewed to low complexity over residues 67–97 (STSN…QQQA), 157–241 (KPTT…QQKP), and 248–284 (PQNI…QQQQ). Basic and acidic residues predominate over residues 310–321 (QKSDKTSEKENK). Residues 441 to 515 (QLKVRVIEKA…KDEVLVLCPN (75 aa)) form the CRIM domain. 2 disordered regions span residues 522–581 (KSSS…QQTQ) and 594–646 (QQQQ…GPDA). Low complexity-rich tracts occupy residues 537-556 (NNNN…SNNN), 563-581 (QPQQ…QQTQ), and 594-620 (QQQQ…QPDQ). The segment covering 621 to 631 (VGGGGGGGGGN) has biased composition (gly residues). Residues 648 to 717 (LVVKITLPDS…GGADLILVSR (70 aa)) enclose the RBD domain.

It belongs to the SIN1 family. Interacts with activated RasG. Part of a complex, TORC2, consisting of tor, lst8, piaA and ripA. Additional proteins, such as 14-3-3 and heat-shock proteins, may also belong to the TORC2 complex.

Its function is as follows. Component of a Ras-regulated pathway involved in integrating chemotaxis and signal relay pathways that are essential for aggregation. The sequence is that of Ras-interacting protein RIP3 (ripA) from Dictyostelium discoideum (Social amoeba).